Here is a 79-residue protein sequence, read N- to C-terminus: Small ribosomal subunit protein bS18 (79 aa).

It belongs to the bacterial ribosomal protein bS18 family. In terms of assembly, part of the 30S ribosomal subunit. Forms a tight heterodimer with protein bS6.

Binds as a heterodimer with protein bS6 to the central domain of the 16S rRNA, where it helps stabilize the platform of the 30S subunit. The chain is Small ribosomal subunit protein bS18 from Streptococcus pneumoniae serotype 19F (strain G54).